A 529-amino-acid polypeptide reads, in one-letter code: GMP synthase [glutamine-hydrolyzing] (529 aa).

Residues T3–D204 enclose the Glutamine amidotransferase type-1 domain. C87 acts as the Nucleophile in catalysis. Catalysis depends on residues H179 and E181. One can recognise a GMPS ATP-PPase domain in the interval W205–R395. S232–S238 contacts ATP.

As to quaternary structure, homodimer.

The catalysed reaction is XMP + L-glutamine + ATP + H2O = GMP + L-glutamate + AMP + diphosphate + 2 H(+). It functions in the pathway purine metabolism; GMP biosynthesis; GMP from XMP (L-Gln route): step 1/1. In terms of biological role, catalyzes the synthesis of GMP from XMP. This is GMP synthase [glutamine-hydrolyzing] from Anaplasma marginale (strain St. Maries).